Here is a 101-residue protein sequence, read N- to C-terminus: MTQQQDELDQIKSQIQEHLISSGNYDIINKQLKLQLYESGWFDKVTQLANRELQENSAHDTAVSFDQLFSFVKPKAEEMVPSNIKEDVLERLKDYLDDVIQ.

The protein belongs to the ENY2 family. In terms of assembly, component of the nuclear pore complex (NPC)-associated TREX-2 complex (transcription and export complex 2), composed of at least SUS1, SAC3, THP1, SEM1, and CDC31. TREX-2 contains 2 SUS1 chains. The TREX-2 complex interacts with the nucleoporin NUP1. Component of the 1.8 MDa SAGA transcription coactivator-HAT complex. SAGA is built of 5 distinct domains with specialized functions. Within the SAGA complex, SUS1, SGF11, SGF73 and UBP8 form an additional subcomplex of SAGA called the DUB module (deubiquitination module). Interacts directly with THP1, SAC3, SGF11, and with the RNA polymerase II.

It localises to the nucleus. The protein resides in the nucleoplasm. The protein localises to the cytoplasm. It is found in the P-body. Its function is as follows. Involved in mRNA export coupled transcription activation by association with both the TREX-2 and the SAGA complexes. At the promoters, SAGA is required for recruitment of the basal transcription machinery. It influences RNA polymerase II transcriptional activity through different activities such as TBP interaction and promoter selectivity, interaction with transcription activators, and chromatin modification through histone acetylation and deubiquitination. Within the SAGA complex, participates in a subcomplex required for deubiquitination of H2B and for the maintenance of steady-state H3 methylation levels. The TREX-2 complex functions in docking export-competent ribonucleoprotein particles (mRNPs) to the nuclear entrance of the nuclear pore complex (nuclear basket). TREX-2 participates in mRNA export and accurate chromatin positioning in the nucleus by tethering genes to the nuclear periphery. May also be involved in cytoplasmic mRNA decay by interaction with components of P-bodies. The sequence is that of Transcription and mRNA export factor SUS1 from Debaryomyces hansenii (strain ATCC 36239 / CBS 767 / BCRC 21394 / JCM 1990 / NBRC 0083 / IGC 2968) (Yeast).